The following is a 163-amino-acid chain: Ankyrin repeat domain-containing protein 37 (163 aa).

3 ANK repeats span residues 29–58, 62–91, and 95–124; these read LGQSPAHLAACGGQAFFLLWQLQTGVDVNQ, FGEAPIHKAARSGSMECLSLLIASDARIDM, and DGHTAEDVALSCGFLDCARYLATIKLTQDT. The short motif at 129-149 is the Nuclear localization signal element; the sequence is QSSLHNLKETAAGVKRGQCCQ.

It is found in the nucleus. Its subcellular location is the cytoplasm. The sequence is that of Ankyrin repeat domain-containing protein 37 (ankrd37) from Xenopus tropicalis (Western clawed frog).